The sequence spans 146 residues: uncharacterized protein (146 aa).

A compositionally biased stretch (acidic residues) spans 86-96; sequence EFDSPMDEEEE. A disordered region spans residues 86–124; that stretch reads EFDSPMDEEEETKPREASLDQTAPKKSKKEELLVKNNNF.

This is an uncharacterized protein from Ostreid herpesvirus 1 (isolate France) (OsHV-1).